Consider the following 64-residue polypeptide: MGQVFMVHHGDVEQALRRLKQHLSREGITPGRKRIFEKPSEKRHRRAVETRRKIRKQKLRVVPY.

The protein belongs to the bacterial ribosomal protein bS21 family.

This chain is Small ribosomal subunit protein bS21, found in Neorickettsia sennetsu (strain ATCC VR-367 / Miyayama) (Ehrlichia sennetsu).